Here is a 154-residue protein sequence, read N- to C-terminus: 3-dehydroquinate dehydratase 2 (154 aa).

Residue Y23 is the Proton acceptor of the active site. The substrate site is built by N79, H85, and D92. The active-site Proton donor is the H105. Residues I106–S107 and R116 contribute to the substrate site.

It belongs to the type-II 3-dehydroquinase family. Homododecamer.

The catalysed reaction is 3-dehydroquinate = 3-dehydroshikimate + H2O. It functions in the pathway metabolic intermediate biosynthesis; chorismate biosynthesis; chorismate from D-erythrose 4-phosphate and phosphoenolpyruvate: step 3/7. Its function is as follows. Catalyzes a trans-dehydration via an enolate intermediate. The polypeptide is 3-dehydroquinate dehydratase 2 (aroQ2) (Ralstonia nicotianae (strain ATCC BAA-1114 / GMI1000) (Ralstonia solanacearum)).